A 373-amino-acid polypeptide reads, in one-letter code: XK-related protein 9 (373 aa).

Transmembrane regions (helical) follow at residues 8–28, 38–58, 166–186, 206–226, 230–250, 256–276, 295–315, and 318–338; these read FMMSVLGIIIYVTDLVADIVL, YVLGVLTLSFVLCGTLIVHCF, MVIMVSCCAISWSTVDYQIAL, LFYKLLTLLSWMLSVVLLLFV, VALLLLLFLWITGFIWAFINH, SVSMEFLYRIVVGFILVFTFF, VLGTLGILTVFWIYPLSIFNS, and FIPISATIVLALLLGIIFLGV.

Belongs to the XK family. In terms of processing, undergoes proteolytic processing by caspase-3 (CASP3), caspase-6 (CASP6) and caspase-7 (CASP7) to generate the XK-related protein 9, processed form, leading to its activation. Highly expressed in the small intestines; weakly expressed in the pancreas, liver, stomach, and large intestines.

The protein localises to the cell membrane. It catalyses the reaction a 1,2-diacyl-sn-glycero-3-phospho-L-serine(in) = a 1,2-diacyl-sn-glycero-3-phospho-L-serine(out). Its activity is regulated as follows. Activated upon caspase cleavage to generate the XK-related protein 9, processed form. Does not act prior the onset of apoptosis. Phospholipid scramblase that promotes phosphatidylserine exposure on apoptotic cell surface. Phosphatidylserine is a specific marker only present at the surface of apoptotic cells and acts as a specific signal for engulfment. This is XK-related protein 9 from Mus musculus (Mouse).